Here is a 319-residue protein sequence, read N- to C-terminus: Insulin gene enhancer protein ISL-2 (319 aa).

LIM zinc-binding domains lie at 1–43 and 52–106; these read FLLR…CKRD and CAQC…RADH. Disordered regions lie at residues 106–151, 218–237, and 286–319; these read HGPP…EKTT, QQHSDKTSLQGLTGTPLVAG, and ESGSLGTSSGSDVTSLSSQLPDTPNSMVPSPAET. The segment at residues 150 to 209 is a DNA-binding region (homeobox); it reads TTRVRTVLNEKQLHTLRTCYAANPRPDALMKEQLVEMTGLSPRVIRVWFQNKRCKDKKKS. The segment covering 218–230 has biased composition (polar residues); the sequence is QQHSDKTSLQGLT. Over residues 286–303 the composition is skewed to low complexity; it reads ESGSLGTSSGSDVTSLSS. The segment covering 304 to 319 has biased composition (polar residues); that stretch reads QLPDTPNSMVPSPAET.

It localises to the nucleus. In terms of biological role, transcriptional factor that defines subclasses of motoneurons that segregate into columns in the spinal cord and select distinct axon pathways. Acts in conjunction with LIM-1, LIM-3 and ISL-1. This is Insulin gene enhancer protein ISL-2 (ISL2) from Gallus gallus (Chicken).